Here is an 84-residue protein sequence, read N- to C-terminus: Beta-cardiotoxin CTX27 (84 aa).

An N-terminal signal peptide occupies residues 1–21; sequence MKTLLLTLVVVTIVCLDLGYT. Cystine bridges form between C24–C43, C36–C61, C65–C76, and C77–C82.

Belongs to the three-finger toxin family. Short-chain subfamily. Aminergic toxin sub-subfamily. As to expression, expressed by the venom gland.

It is found in the secreted. In terms of biological role, acts as a beta-blocker by binding to beta-1 and beta-2 adrenergic receptors (ADRB1 and ADRB2). It dose-dependently decreases the heart rate (bradycardia), whereas conventional cardiotoxins increases it. At 100 mg/kg, intraperitoneal injection into mice provokes labored breathing, impaired locomotion, lack of response to external stimuli, and death (after 30 minutes). In Ophiophagus hannah (King cobra), this protein is Beta-cardiotoxin CTX27.